The primary structure comprises 81 residues: Large ribosomal subunit protein bL31B (81 aa).

It belongs to the bacterial ribosomal protein bL31 family. Type B subfamily. In terms of assembly, part of the 50S ribosomal subunit.

The chain is Large ribosomal subunit protein bL31B from Bacillus cereus (strain ATCC 10987 / NRS 248).